The chain runs to 137 residues: Small ribosomal subunit protein uS9 (137 aa).

It belongs to the universal ribosomal protein uS9 family.

In Sulfurisphaera tokodaii (strain DSM 16993 / JCM 10545 / NBRC 100140 / 7) (Sulfolobus tokodaii), this protein is Small ribosomal subunit protein uS9 (rps9).